The following is a 101-amino-acid chain: Small ribosomal subunit protein uS14 (101 aa).

The tract at residues 1-21 (MAKTSAVEKNKRRRKSVAQQA) is disordered.

Belongs to the universal ribosomal protein uS14 family. As to quaternary structure, part of the 30S ribosomal subunit. Contacts proteins S3 and S10.

Functionally, binds 16S rRNA, required for the assembly of 30S particles and may also be responsible for determining the conformation of the 16S rRNA at the A site. In Agrobacterium fabrum (strain C58 / ATCC 33970) (Agrobacterium tumefaciens (strain C58)), this protein is Small ribosomal subunit protein uS14.